Consider the following 374-residue polypeptide: Glutamate 5-kinase (374 aa).

ATP is bound at residue Lys9. Substrate contacts are provided by Ser49, Asp136, and Asn148. ATP-binding positions include 168–169 and 210–216; these read TD and TGGMRSK. In terms of domain architecture, PUA spans 276–354; it reads SGTITVDSGA…EEARQYSYLH (79 aa).

Belongs to the glutamate 5-kinase family.

It is found in the cytoplasm. The enzyme catalyses L-glutamate + ATP = L-glutamyl 5-phosphate + ADP. The protein operates within amino-acid biosynthesis; L-proline biosynthesis; L-glutamate 5-semialdehyde from L-glutamate: step 1/2. Its function is as follows. Catalyzes the transfer of a phosphate group to glutamate to form L-glutamate 5-phosphate. This Geobacillus thermodenitrificans (strain NG80-2) protein is Glutamate 5-kinase.